Reading from the N-terminus, the 377-residue chain is UPF0754 membrane protein RBAM_010020 (377 aa).

Helical transmembrane passes span 1–21 (MGIAGTFLFMIVIGAAIGAVT) and 357–377 (YLGGLLGGIIGAIQALFVILF).

The protein belongs to the UPF0754 family.

The protein resides in the cell membrane. The protein is UPF0754 membrane protein RBAM_010020 of Bacillus velezensis (strain DSM 23117 / BGSC 10A6 / LMG 26770 / FZB42) (Bacillus amyloliquefaciens subsp. plantarum).